The primary structure comprises 307 residues: Glutaminase (307 aa).

Residues Ser-67, Asn-117, Glu-161, Asn-168, Tyr-192, Tyr-243, and Val-261 each contribute to the substrate site.

Belongs to the glutaminase family. In terms of assembly, homotetramer.

The catalysed reaction is L-glutamine + H2O = L-glutamate + NH4(+). This Streptomyces coelicolor (strain ATCC BAA-471 / A3(2) / M145) protein is Glutaminase.